Here is a 316-residue protein sequence, read N- to C-terminus: Transaldolase (316 aa).

The Schiff-base intermediate with substrate role is filled by Lys-127.

It belongs to the transaldolase family. Type 2 subfamily.

It is found in the cytoplasm. It catalyses the reaction D-sedoheptulose 7-phosphate + D-glyceraldehyde 3-phosphate = D-erythrose 4-phosphate + beta-D-fructose 6-phosphate. Its pathway is carbohydrate degradation; pentose phosphate pathway; D-glyceraldehyde 3-phosphate and beta-D-fructose 6-phosphate from D-ribose 5-phosphate and D-xylulose 5-phosphate (non-oxidative stage): step 2/3. Functionally, transaldolase is important for the balance of metabolites in the pentose-phosphate pathway. This Helicobacter pylori (strain HPAG1) protein is Transaldolase.